The primary structure comprises 237 residues: Orotate phosphoribosyltransferase (237 aa).

Lys29 contributes to the 5-phospho-alpha-D-ribose 1-diphosphate binding site. An orotate-binding site is contributed by 37 to 38 (FF). 5-phospho-alpha-D-ribose 1-diphosphate contacts are provided by residues 79 to 80 (YK), Arg105, Lys106, Lys109, His111, and 130 to 138 (DDVMSAGTA). The orotate site is built by Ser134 and Arg162.

This sequence belongs to the purine/pyrimidine phosphoribosyltransferase family. PyrE subfamily. As to quaternary structure, homodimer. Mg(2+) is required as a cofactor.

The enzyme catalyses orotidine 5'-phosphate + diphosphate = orotate + 5-phospho-alpha-D-ribose 1-diphosphate. It functions in the pathway pyrimidine metabolism; UMP biosynthesis via de novo pathway; UMP from orotate: step 1/2. Functionally, catalyzes the transfer of a ribosyl phosphate group from 5-phosphoribose 1-diphosphate to orotate, leading to the formation of orotidine monophosphate (OMP). This is Orotate phosphoribosyltransferase from Polaromonas naphthalenivorans (strain CJ2).